The primary structure comprises 402 residues: Aminotransferase-like protein FGM3 (402 aa).

Pyridoxal 5'-phosphate contacts are provided by residues 137–138, D218, and 282–283; these read TI and FG.

This sequence belongs to the class-V pyridoxal-phosphate-dependent aminotransferase family. Csd subfamily.

Functionally, aminotransferase-like protein; part of the Fg3_54/C64 gene cluster that mediates the biosynthesis of the octapeptide fusaoctaxin A, a virulence factor that is required for cell-to-cell invasiveness of plant host. The 2 nonribosomal peptide synthetases NRPS9 and NRPS5 form an assembly line which likely utilizes GABA as a starter unit (loaded on the unique module M1 of NRPS9) and sequentially incorporates seven extender units composed of the residues L-Ala, L-allo-Ile, L-Ser, L-Val, L-Ser, L-Leu and L-Leu, respectively. During the process, each of the residues that are tethered on modules M3-M7 of NRPS5 containing an E domain can undergo an epimerization reaction to produce a D-configuration before the transpeptidation reaction occurs. The elongation of the peptidyl chain might be terminated by module M8-mediated L-Leu incorporation, followed by R domain-catalyzed 4 electron reduction to release the resulting octapeptide from the assembly line as an alcohol. Fusaoctaxin A is cleaved by the cluster specific ABC transporter FGM5 to the pentapeptide fusapentaxin A and the tripeptide fusatrixin A. The other enzymes from the cluster, FGM1, FGM2, FGM3 and FGM9 seem not to be involved in the biosynthesis of fusaoctaxin A and their functions have still to be determined. The polypeptide is Aminotransferase-like protein FGM3 (Gibberella zeae (strain ATCC MYA-4620 / CBS 123657 / FGSC 9075 / NRRL 31084 / PH-1) (Wheat head blight fungus)).